We begin with the raw amino-acid sequence, 207 residues long: Glutathione S-transferase 3 (207 aa).

Positions 2–79 (VHYKLTYFNA…YLARKFGFVG (78 aa)) constitute a GST N-terminal domain. Glutathione contacts are provided by residues Y8, K43, 49–51 (GQV), and 63–64 (QS). Residues 81-207 (TAEEELQADE…WLAKRPETRF (127 aa)) enclose the GST C-terminal domain.

Belongs to the GST superfamily. Sigma family.

It carries out the reaction RX + glutathione = an S-substituted glutathione + a halide anion + H(+). Its function is as follows. Conjugation of reduced glutathione to a wide number of exogenous and endogenous hydrophobic electrophiles. This chain is Glutathione S-transferase 3 (gst-3), found in Caenorhabditis elegans.